The primary structure comprises 505 residues: 2,3-bisphosphoglycerate-independent phosphoglycerate mutase (505 aa).

Mn(2+)-binding residues include Asp12 and Ser62. Ser62 (phosphoserine intermediate) is an active-site residue. Substrate contacts are provided by residues His123, 153-154 (RD), Arg185, Arg191, 257-260 (RPDR), and Lys330. The Mn(2+) site is built by Asp397, His401, Asp438, His439, and His456.

It belongs to the BPG-independent phosphoglycerate mutase family. In terms of assembly, monomer. It depends on Mn(2+) as a cofactor.

It catalyses the reaction (2R)-2-phosphoglycerate = (2R)-3-phosphoglycerate. The protein operates within carbohydrate degradation; glycolysis; pyruvate from D-glyceraldehyde 3-phosphate: step 3/5. Catalyzes the interconversion of 2-phosphoglycerate and 3-phosphoglycerate. This is 2,3-bisphosphoglycerate-independent phosphoglycerate mutase from Staphylococcus aureus (strain Mu50 / ATCC 700699).